Here is a 603-residue protein sequence, read N- to C-terminus: NADH-ubiquinone oxidoreductase chain 5 (603 aa).

16 consecutive transmembrane segments (helical) span residues L4 to L24, M38 to G58, L87 to Y107, F117 to L137, L140 to G160, A171 to L191, L211 to L233, T241 to I261, I273 to L293, I301 to N320, T331 to G351, L366 to L386, L409 to F429, L457 to V477, F488 to T508, and M583 to I603.

Belongs to the complex I subunit 5 family.

The protein resides in the mitochondrion inner membrane. The catalysed reaction is a ubiquinone + NADH + 5 H(+)(in) = a ubiquinol + NAD(+) + 4 H(+)(out). Core subunit of the mitochondrial membrane respiratory chain NADH dehydrogenase (Complex I) that is believed to belong to the minimal assembly required for catalysis. Complex I functions in the transfer of electrons from NADH to the respiratory chain. The immediate electron acceptor for the enzyme is believed to be ubiquinone. The polypeptide is NADH-ubiquinone oxidoreductase chain 5 (MT-ND5) (Dugong dugon (Dugong)).